The chain runs to 516 residues: Oxysterol-binding protein-like protein 1 (516 aa).

2 disordered regions span residues 168 to 240 and 459 to 501; these read PLGK…SQKS and KQEI…EEGK. Over residues 178 to 187 the composition is skewed to polar residues; sequence SRTTSSQSVA. At S182 the chain carries Phosphoserine. The span at 197–206 shows a compositional bias: basic residues; the sequence is TSKKKSSKKN. The span at 218 to 238 shows a compositional bias: polar residues; it reads DRSSTAPSTAESNNEHLSSSQ.

Belongs to the OSBP family.

It is found in the endoplasmic reticulum. The chain is Oxysterol-binding protein-like protein 1 (obp1) from Schizosaccharomyces pombe (strain 972 / ATCC 24843) (Fission yeast).